Reading from the N-terminus, the 464-residue chain is Protein ABHD18 (464 aa).

The signal sequence occupies residues 1-24; that stretch reads MGVSKLDILYRRLLLTKLFIRGWG. The N-linked (GlcNAc...) asparagine glycan is linked to Asn-341.

This sequence belongs to the AB hydrolase superfamily.

The protein localises to the secreted. This is Protein ABHD18 from Rattus norvegicus (Rat).